Reading from the N-terminus, the 254-residue chain is Aspartate/glutamate leucyltransferase (254 aa).

Belongs to the R-transferase family. Bpt subfamily.

Its subcellular location is the cytoplasm. It carries out the reaction N-terminal L-glutamyl-[protein] + L-leucyl-tRNA(Leu) = N-terminal L-leucyl-L-glutamyl-[protein] + tRNA(Leu) + H(+). It catalyses the reaction N-terminal L-aspartyl-[protein] + L-leucyl-tRNA(Leu) = N-terminal L-leucyl-L-aspartyl-[protein] + tRNA(Leu) + H(+). In terms of biological role, functions in the N-end rule pathway of protein degradation where it conjugates Leu from its aminoacyl-tRNA to the N-termini of proteins containing an N-terminal aspartate or glutamate. This Xylella fastidiosa (strain 9a5c) protein is Aspartate/glutamate leucyltransferase.